The primary structure comprises 365 residues: MQQSDLQEQQLYRSLFLLKTPLIDLRAPVEFAQGAFPESCNLPLMTDNEREQVGTCYKKEGQAAAITLGHQLVASDIQNRIRKWAQFKEENPTAWLYCFRGGLRSRLSAQFLKDHGVDINIVPGGYKALRRYLINVIDQASEKKLMIVGGNTGCGKTLLIQALDNGLDIEGRANHRGSSFGKQVTEQPRQISYENQLAVDILHISQHASSLVIEDESKAVGALYVPERLFAGMTRAPMVVVNDPLEIRLQRLCYEYCTLMTEKFNLALGAEQGWQAYEKYLQNGLYGIRKRLGTEKFKVMNTVLEAALKQQKNTGSVEGHLNWIASILRDYYDPMYQYQLEKKADRVQFRGTFQEVKEWLTVNTK.

The region spanning F16–D138 is the Rhodanese domain. C98 (S-selanylcysteine intermediate) is an active-site residue.

It belongs to the SelU family. As to quaternary structure, monomer.

It catalyses the reaction 5-methylaminomethyl-2-thiouridine(34) in tRNA + selenophosphate + (2E)-geranyl diphosphate + H2O + H(+) = 5-methylaminomethyl-2-selenouridine(34) in tRNA + (2E)-thiogeraniol + phosphate + diphosphate. The enzyme catalyses 5-methylaminomethyl-2-thiouridine(34) in tRNA + (2E)-geranyl diphosphate = 5-methylaminomethyl-S-(2E)-geranyl-thiouridine(34) in tRNA + diphosphate. The catalysed reaction is 5-methylaminomethyl-S-(2E)-geranyl-thiouridine(34) in tRNA + selenophosphate + H(+) = 5-methylaminomethyl-2-(Se-phospho)selenouridine(34) in tRNA + (2E)-thiogeraniol. It carries out the reaction 5-methylaminomethyl-2-(Se-phospho)selenouridine(34) in tRNA + H2O = 5-methylaminomethyl-2-selenouridine(34) in tRNA + phosphate. In terms of biological role, involved in the post-transcriptional modification of the uridine at the wobble position (U34) of tRNA(Lys), tRNA(Glu) and tRNA(Gln). Catalyzes the conversion of 2-thiouridine (S2U-RNA) to 2-selenouridine (Se2U-RNA). Acts in a two-step process involving geranylation of 2-thiouridine (S2U) to S-geranyl-2-thiouridine (geS2U) and subsequent selenation of the latter derivative to 2-selenouridine (Se2U) in the tRNA chain. The polypeptide is tRNA 2-selenouridine synthase (Psychromonas ingrahamii (strain DSM 17664 / CCUG 51855 / 37)).